A 442-amino-acid chain; its full sequence is Kelch domain-containing protein 10 (442 aa).

Residues 1–57 (MSAAQGWDRNRRRGGGAAGAGGGGSGAGGGSGGSGGRGTGQLNRFVQLSGRPHLPGK) form a disordered region. Arginine 13 is subject to Omega-N-methylarginine. A compositionally biased stretch (gly residues) spans 15–39 (GGAAGAGGGGSGAGGGSGGSGGRGT). 6 Kelch repeats span residues 87 to 154 (RPPP…PREL), 155 to 198 (ASMS…ALLS), 199 to 260 (CRGK…PEER), 261 to 319 (YRHE…RRCH), 320 to 364 (SCVQ…PEPV), and 365 to 403 (YFHC…LVVP). An interaction with CUL2 region spans residues 401 to 442 (VVPSLLELAWEKLLAAFPNLANLSRTQLLHLGLTQGLIERLK).

It belongs to the KLHDC10 family. Component of a CRL2 E3 ubiquitin-protein ligase complex, also named ECS (Elongin BC-CUL2/5-SOCS-box protein) complex, composed of CUL2, Elongin BC (ELOB and ELOC), RBX1 and substrate-specific adapter KLHDC10. Interacts (via the 6 Kelch repeats) with PPP5C.

Its subcellular location is the nucleus. The protein resides in the cytoplasm. Its pathway is protein modification; protein ubiquitination. In terms of biological role, substrate-recognition component of a Cul2-RING (CRL2) E3 ubiquitin-protein ligase complex of the DesCEND (destruction via C-end degrons) pathway, which recognizes a C-degron located at the extreme C-terminus of target proteins, leading to their ubiquitination and degradation. The C-degron recognized by the DesCEND pathway is usually a motif of less than ten residues and can be present in full-length proteins, truncated proteins or proteolytically cleaved forms. The CRL2(KLHDC10) complex specifically recognizes proteins with a proline-glycine (Pro-Gly) or an alanine tail (CAT tail) at the C-terminus, leading to their ubiquitination and degradation. The CRL2(KLHDC10) complex is involved in the ribosome-associated quality control (RQC) pathway, which mediates the extraction of incompletely synthesized nascent chains from stalled ribosomes: CRL2(KLHDC10) acts downstream of NEMF and recognizes CAT tails associated with stalled nascent chains, leading to their ubiquitination and degradation. Participates in the oxidative stress-induced cell death through MAP3K5 activation. Inhibits PPP5C phosphatase activity on MAP3K5. Acts as a regulator of necroptosis. The protein is Kelch domain-containing protein 10 of Homo sapiens (Human).